Here is a 404-residue protein sequence, read N- to C-terminus: Trigger factor (404 aa).

In terms of domain architecture, PPIase FKBP-type spans 160–225 (KDHLFVRTEE…VLEVKTLKLP (66 aa)).

Belongs to the FKBP-type PPIase family. Tig subfamily.

The protein localises to the cytoplasm. The enzyme catalyses [protein]-peptidylproline (omega=180) = [protein]-peptidylproline (omega=0). Involved in protein export. Acts as a chaperone by maintaining the newly synthesized protein in an open conformation. Functions as a peptidyl-prolyl cis-trans isomerase. The sequence is that of Trigger factor from Thermus thermophilus (strain ATCC 27634 / DSM 579 / HB8).